Reading from the N-terminus, the 501-residue chain is Ell-associated factor Eaf (501 aa).

Polar residues-rich tracts occupy residues asparagine 138–alanine 149 and glutamate 173–asparagine 192. Disordered stretches follow at residues asparagine 138–aspartate 226 and glycine 256–aspartate 501. 2 stretches are compositionally biased toward low complexity: residues arginine 200–serine 221 and glycine 256–glycine 270. The residue at position 202 (serine 202) is a Phosphoserine. Residues glutamine 271 to isoleucine 283 show a composition bias toward polar residues. Composition is skewed to low complexity over residues glutamine 302–proline 314 and glutamine 329–proline 343. Positions aspartate 393–glutamate 408 are enriched in acidic residues. 3 stretches are compositionally biased toward low complexity: residues glutamine 416 to glutamine 437, glutamine 455 to glutamine 471, and asparagine 483 to aspartate 501.

This sequence belongs to the EAF family.

Its subcellular location is the nucleus. Promotes transcriptional elongation by Su(Tpl)/ELL. Essential for development. In Drosophila yakuba (Fruit fly), this protein is Ell-associated factor Eaf.